The chain runs to 267 residues: DNA damage-regulated autophagy modulator protein 2 (267 aa).

The next 6 membrane-spanning stretches (helical) occupy residues 8–28, 53–73, 87–107, 118–138, 160–180, and 203–223; these read LSFL…FSYI, RCLF…TIYV, LIIK…LGLS, FIVH…YMFV, LLLV…SSIL, and VLHI…FGFF.

The protein belongs to the DRAM/TMEM150 family.

The protein localises to the lysosome membrane. The protein resides in the photoreceptor inner segment. It localises to the apical cell membrane. Plays a role in the initiation of autophagy. In the retina, might be involved in the process of photoreceptor cells renewal and recycling to preserve visual function. Induces apoptotic cell death when coexpressed with DRAM1. The sequence is that of DNA damage-regulated autophagy modulator protein 2 (Dram2) from Rattus norvegicus (Rat).